We begin with the raw amino-acid sequence, 416 residues long: MLRVMTSRNFLTIDDFDIRGKTILLRVDMNSPMDTQGHILDDMRIKSHIATLKDLESAKVVLLAHQSRPGKKDFTTMKPHAHLLSRYLGKQVTYVDDIFGTFAKTHIASMEDGDVIMLENVRFYSEESLERTPAEQANTYMVKKLAPFVDIFLNDAFAVAHRSHLSVVGFTEVLPSGAGRVMEKELVSLDRGVKGGERPSIFVLGGAKVDDSLRVTENVLTSGGADRVLLTGVVANVALAASGVNIGKVNMDFIKSQGYENQIEKARGLLAKFKDRIGLPKDVALNDNRERVEVHISELNSDSLPINDIGLETIVDYTNEIQNSKTVVLNGPAGVSEIEDFALGTHEIIKAAIKSDFSIIGGGHISVEVAHLGLEHRFSHISTGGGACIDYLAGEKLPGVESLKAAYIKYQEAKKL.

Substrate contacts are provided by residues Asp-28–Asn-30, Arg-44, His-65–Arg-68, Arg-122, and Arg-162. ATP is bound by residues Glu-337 and Gly-362 to Ile-365.

Belongs to the phosphoglycerate kinase family. Monomer.

Its subcellular location is the cytoplasm. The enzyme catalyses (2R)-3-phosphoglycerate + ATP = (2R)-3-phospho-glyceroyl phosphate + ADP. The protein operates within carbohydrate degradation; glycolysis; pyruvate from D-glyceraldehyde 3-phosphate: step 2/5. The polypeptide is Phosphoglycerate kinase 2 (Methanosarcina acetivorans (strain ATCC 35395 / DSM 2834 / JCM 12185 / C2A)).